The primary structure comprises 498 residues: ATP synthase subunit beta, chloroplastic (498 aa).

Residue 172–179 (GGAGVGKT) coordinates ATP.

This sequence belongs to the ATPase alpha/beta chains family. As to quaternary structure, F-type ATPases have 2 components, CF(1) - the catalytic core - and CF(0) - the membrane proton channel. CF(1) has five subunits: alpha(3), beta(3), gamma(1), delta(1), epsilon(1). CF(0) has four main subunits: a(1), b(1), b'(1) and c(9-12).

Its subcellular location is the plastid. The protein resides in the chloroplast thylakoid membrane. The catalysed reaction is ATP + H2O + 4 H(+)(in) = ADP + phosphate + 5 H(+)(out). Produces ATP from ADP in the presence of a proton gradient across the membrane. The catalytic sites are hosted primarily by the beta subunits. The sequence is that of ATP synthase subunit beta, chloroplastic from Trochodendron aralioides (Wheel tree).